The sequence spans 555 residues: Glucose-6-phosphate isomerase (555 aa).

D-glucose 6-phosphate-binding positions include 169–170 (GS), 219–224 (SKTFTT), Gln-364, Glu-368, His-399, and Lys-521. The active-site Proton donor is the Glu-368. Catalysis depends on residues His-399 and Lys-521.

It belongs to the GPI family. Homodimer.

The protein localises to the cytoplasm. It localises to the cytosol. The catalysed reaction is alpha-D-glucose 6-phosphate = beta-D-fructose 6-phosphate. The protein operates within carbohydrate degradation; glycolysis; D-glyceraldehyde 3-phosphate and glycerone phosphate from D-glucose: step 2/4. Its function is as follows. In the cytoplasm, catalyzes the conversion of glucose-6-phosphate to fructose-6-phosphate, the second step in glycolysis, and the reverse reaction during gluconeogenesis. In Candida glabrata (strain ATCC 2001 / BCRC 20586 / JCM 3761 / NBRC 0622 / NRRL Y-65 / CBS 138) (Yeast), this protein is Glucose-6-phosphate isomerase (PGI1).